Here is a 622-residue protein sequence, read N- to C-terminus: MSTDNKQSLSAITLAAIGVVYGDIGTSPLYTLRECLSGQFGFGVERDAVFGFLSLIFWLLIFVVSIKYLTFVMRADNAGEGGILTLMSLAGRNTSARMTSTLVIMGLIGGSFFYGEVVITPAISVMSAIEGLEIVAPELDTWVVPLSIIVLTLLFMIQKHGTGMVGKLFAPIMLTWFLILAGLGLRSIIANPDVLHALNPMWAAKFFLEYKTVSFIALGAVVLSITGVEALYADMGHFGKLPIRLAWFSVVLPSLTLNYFGQGALLLKHPEAIKNPFFLLAPEWALIPLLILAALATVIASQAVISGVFSLTRQAVRLGYLSPMRIIHTSEMESGQIYIPFVNWMLYFAVVIVIVSFERSSNLAAAYGIAVTGTMVLTSILSTTVARKNWHWNKYFVALILVAFLCVDVPLFSANLDKLLSGGWLPLTLGIVMFIIMTTWKSERFRLLRRMHEHGNSLEALIASLEKSPPVRVPGTAVYMSRALNVIPFALLHNLKHNKVLHERVILLTLRTEDAPYVHNVRRVQIEQLSPTFWRVVASYGWRETPNVEEVFHRCGLEGLSCRMMETSFFMSHESLILGKRPWYLRLRGKLYLLLQRNALRAPDQFEIPPNRVIELGTQVEI.

12 helical membrane-spanning segments follow: residues 9-29, 49-69, 103-123, 137-157, 165-185, 213-233, 247-267, 276-296, 337-357, 363-383, 396-416, and 419-439; these read LSAI…TSPL, VFGF…IKYL, VIMG…TPAI, PELD…LFMI, VGKL…GLGL, VSFI…ALYA, WFSV…ALLL, PFFL…AALA, IYIP…IVSF, LAAA…ILST, FVAL…SANL, and LLSG…IMTT.

The protein belongs to the HAK/KUP transporter (TC 2.A.72) family.

It localises to the cell inner membrane. The enzyme catalyses K(+)(in) + H(+)(in) = K(+)(out) + H(+)(out). Its function is as follows. Responsible for the low-affinity transport of potassium into the cell. Likely operates as a K(+):H(+) symporter. The protein is Low affinity potassium transport system protein Kup of Citrobacter koseri (strain ATCC BAA-895 / CDC 4225-83 / SGSC4696).